A 323-amino-acid polypeptide reads, in one-letter code: GDP-mannose 4,6-dehydratase (323 aa).

Residues 11–14, arginine 36, 59–60, and 81–85 each bind NADP(+); these read TGQD, DM, and LAAQS. Residue threonine 126 is part of the active site. Catalysis depends on nucleophile residues glutamate 128 and tyrosine 150. Residues lysine 154, histidine 180, and arginine 185 each contribute to the NADP(+) site.

This sequence belongs to the NAD(P)-dependent epimerase/dehydratase family. GDP-mannose 4,6-dehydratase subfamily. In terms of assembly, homotetramer. It depends on NADP(+) as a cofactor.

The enzyme catalyses GDP-alpha-D-mannose = GDP-4-dehydro-alpha-D-rhamnose + H2O. Its pathway is bacterial outer membrane biogenesis; lipopolysaccharide biosynthesis. In terms of biological role, catalyzes the conversion of GDP-D-mannose to GDP-4-dehydro-6-deoxy-D-mannose. This Pseudomonas aeruginosa (strain ATCC 15692 / DSM 22644 / CIP 104116 / JCM 14847 / LMG 12228 / 1C / PRS 101 / PAO1) protein is GDP-mannose 4,6-dehydratase.